A 179-amino-acid polypeptide reads, in one-letter code: NADH-quinone oxidoreductase subunit B (179 aa).

The [4Fe-4S] cluster site is built by C53, C54, C118, and C148.

It belongs to the complex I 20 kDa subunit family. In terms of assembly, NDH-1 is composed of 14 different subunits. Subunits NuoB, C, D, E, F, and G constitute the peripheral sector of the complex. It depends on [4Fe-4S] cluster as a cofactor.

It is found in the cell membrane. The enzyme catalyses a quinone + NADH + 5 H(+)(in) = a quinol + NAD(+) + 4 H(+)(out). Functionally, NDH-1 shuttles electrons from NADH, via FMN and iron-sulfur (Fe-S) centers, to quinones in the respiratory chain. The immediate electron acceptor for the enzyme in this species is believed to be a menaquinone. Couples the redox reaction to proton translocation (for every two electrons transferred, four hydrogen ions are translocated across the cytoplasmic membrane), and thus conserves the redox energy in a proton gradient. The protein is NADH-quinone oxidoreductase subunit B of Bacillus thuringiensis (strain Al Hakam).